Reading from the N-terminus, the 776-residue chain is Protein SEY1 (776 aa).

Residues 1–681 lie on the Cytoplasmic side of the membrane; it reads MADRSAIQLI…KRSIITTRTH (681 aa). One can recognise a GB1/RHD3-type G domain in the interval 34 to 263; sequence GLDYHVISVF…TENYYFKPQY (230 aa). Position 44-51 (44-51) interacts with GTP; it reads GSQSSGKS. Residues 682–702 form a helical membrane-spanning segment; that stretch reads IPPWIYVLLAVLGWNEFVAVI. Residues 703–705 are Lumenal-facing; sequence RNP. A helical membrane pass occupies residues 706–726; the sequence is LFVTLTLILGATFFVIHKFGL. At 727–776 the chain is on the cytoplasmic side; it reads WGPVVNVVQSAVGETRTAIKDKLRQFVVEDHEVKESFEMKDFSKNEQKEK.

It belongs to the TRAFAC class dynamin-like GTPase superfamily. GB1/RHD3 GTPase family. RHD3 subfamily. In terms of assembly, interacts with RTN1 and YOP1; GTP binding is not required for these interactions.

The protein resides in the endoplasmic reticulum membrane. Cooperates with the reticulon proteins RTN1 and RTN2 and the tubule-shaping DP1 family protein YOP1 to generate and maintain the structure of the tubular endoplasmic reticulum network. Has GTPase activity, which is required for its function in ER organization. The polypeptide is Protein SEY1 (Saccharomyces cerevisiae (strain YJM789) (Baker's yeast)).